Reading from the N-terminus, the 245-residue chain is tRNA pseudouridine synthase A (245 aa).

The Nucleophile role is filled by D52. Y110 lines the substrate pocket.

The protein belongs to the tRNA pseudouridine synthase TruA family. Homodimer.

The catalysed reaction is uridine(38/39/40) in tRNA = pseudouridine(38/39/40) in tRNA. In terms of biological role, formation of pseudouridine at positions 38, 39 and 40 in the anticodon stem and loop of transfer RNAs. The chain is tRNA pseudouridine synthase A from Borrelia turicatae (strain 91E135).